The sequence spans 273 residues: 4-hydroxy-tetrahydrodipicolinate reductase (273 aa).

Residues 12 to 17 (GAGGRM) and glutamate 38 contribute to the NAD(+) site. Residue arginine 39 coordinates NADP(+). Residues 102 to 104 (GTT) and 126 to 129 (AANF) each bind NAD(+). The active-site Proton donor/acceptor is histidine 159. Histidine 160 is a (S)-2,3,4,5-tetrahydrodipicolinate binding site. The active-site Proton donor is lysine 163. 169–170 (GT) is a (S)-2,3,4,5-tetrahydrodipicolinate binding site.

Belongs to the DapB family. In terms of assembly, homotetramer.

Its subcellular location is the cytoplasm. It catalyses the reaction (S)-2,3,4,5-tetrahydrodipicolinate + NAD(+) + H2O = (2S,4S)-4-hydroxy-2,3,4,5-tetrahydrodipicolinate + NADH + H(+). The enzyme catalyses (S)-2,3,4,5-tetrahydrodipicolinate + NADP(+) + H2O = (2S,4S)-4-hydroxy-2,3,4,5-tetrahydrodipicolinate + NADPH + H(+). The protein operates within amino-acid biosynthesis; L-lysine biosynthesis via DAP pathway; (S)-tetrahydrodipicolinate from L-aspartate: step 4/4. Its function is as follows. Catalyzes the conversion of 4-hydroxy-tetrahydrodipicolinate (HTPA) to tetrahydrodipicolinate. This is 4-hydroxy-tetrahydrodipicolinate reductase from Salmonella choleraesuis (strain SC-B67).